Consider the following 155-residue polypeptide: Ribosome maturation factor RimP (155 aa).

It belongs to the RimP family.

Its subcellular location is the cytoplasm. Required for maturation of 30S ribosomal subunits. The protein is Ribosome maturation factor RimP of Agathobacter rectalis (strain ATCC 33656 / DSM 3377 / JCM 17463 / KCTC 5835 / VPI 0990) (Eubacterium rectale).